The sequence spans 152 residues: Arginine repressor (152 aa).

This sequence belongs to the ArgR family.

It is found in the cytoplasm. It participates in amino-acid biosynthesis; L-arginine biosynthesis [regulation]. Regulates arginine biosynthesis genes. This Lachnoclostridium phytofermentans (strain ATCC 700394 / DSM 18823 / ISDg) (Clostridium phytofermentans) protein is Arginine repressor.